A 407-amino-acid polypeptide reads, in one-letter code: B3 domain-containing protein Os07g0183200 (407 aa).

Positions 124–227 form a DNA-binding region, TF-B3; it reads FVKTLMISDF…ELYVGVRRQR (104 aa).

It localises to the nucleus. This is B3 domain-containing protein Os07g0183200 from Oryza sativa subsp. japonica (Rice).